The sequence spans 48 residues: ATP synthase protein 8 (48 aa).

Residues 12–32 form a helical membrane-spanning segment; that stretch reads LLTFGMLAISMLLYLVSTIIL.

This sequence belongs to the ATPase protein 8 family. As to quaternary structure, F-type ATPases have 2 components, CF(1) - the catalytic core - and CF(0) - the membrane proton channel.

It is found in the mitochondrion membrane. In terms of biological role, mitochondrial membrane ATP synthase (F(1)F(0) ATP synthase or Complex V) produces ATP from ADP in the presence of a proton gradient across the membrane which is generated by electron transport complexes of the respiratory chain. F-type ATPases consist of two structural domains, F(1) - containing the extramembraneous catalytic core and F(0) - containing the membrane proton channel, linked together by a central stalk and a peripheral stalk. During catalysis, ATP synthesis in the catalytic domain of F(1) is coupled via a rotary mechanism of the central stalk subunits to proton translocation. Part of the complex F(0) domain. Minor subunit located with subunit a in the membrane. This chain is ATP synthase protein 8 (ATP8), found in Debaryomyces hansenii (strain ATCC 36239 / CBS 767 / BCRC 21394 / JCM 1990 / NBRC 0083 / IGC 2968) (Yeast).